A 297-amino-acid polypeptide reads, in one-letter code: Halorhodopsin (297 aa).

Positions 1–31 are disordered; that stretch reads MRSRTYHDQSVCGPYGSQRTDCDRDTDAGSD. Topologically, residues 1–45 are extracellular; that stretch reads MRSRTYHDQSVCGPYGSQRTDCDRDTDAGSDTDVHGAQVATQIRT. The chain crosses the membrane as a helical span at residues 46–71; the sequence is DTLLHSSLWVNIALAGLSILVFLYMA. Topologically, residues 72–77 are cytoplasmic; that stretch reads RTVRAN. Residues 78–101 traverse the membrane as a helical segment; sequence RARLIVGATLMIPLVSLSSYLGLV. The Extracellular segment spans residues 102-125; the sequence is TGLTAGPIEMPAAHALAGEDVLSQ. Residues 126-147 form a helical membrane-spanning segment; sequence WGRYLTWTLSTPMILLALGWLA. The Cytoplasmic portion of the chain corresponds to 148–150; the sequence is EVD. A helical membrane pass occupies residues 151–174; it reads TADLFVVIAADIGMCLTGLAAALT. The Extracellular portion of the chain corresponds to 175–177; that stretch reads TSS. The helical transmembrane segment at 178 to 200 threads the bilayer; sequence YAFRWAFYLVSTAFFVVVLYALL. Residues 201–212 lie on the Cytoplasmic side of the membrane; it reads AKWPTNAEAAGT. A helical membrane pass occupies residues 213–236; it reads GDIFGTLRWLTVILWLGYPILWAL. Over 237-246 the chain is Extracellular; it reads GVEGFALVDS. The helical transmembrane segment at 247–275 threads the bilayer; that stretch reads VGLTSWGYSLLDIGAKYLFAALLLRWVAN. Position 262 is an N6-(retinylidene)lysine (Lys262). Over 276–297 the chain is Cytoplasmic; it reads NERTIAVGQRSGRGAIGDPVED.

This sequence belongs to the archaeal/bacterial/fungal opsin family.

The protein resides in the cell membrane. Its function is as follows. Light-driven chloride pump. This is Halorhodopsin (hop) from Haloterrigena sp. (strain arg-4).